The primary structure comprises 611 residues: Pleckstrin homology domain-containing family N member 1 (611 aa).

The disordered stretch occupies residues 1–45 (MGNSHCVPQAPRRLRASFSRKPSLKGNREDSARMSAGLPGPEAAR). Residue glycine 2 is the site of N-myristoyl glycine attachment. The interval 61 to 100 (TDILDLENQRENLEQPFLSVFKKGRRRVPVRNLGKVVHYA) is interaction with C1QBP. PH domains are found at residues 96–192 (VVHY…TALL) and 222–319 (AVCA…THRE). Tyrosine 302 carries the phosphotyrosine modification. 3 disordered regions span residues 323–424 (PLPG…PVTP), 438–468 (ESSP…TSHR), and 483–611 (MQSA…VQWI). A compositionally biased stretch (low complexity) spans 341-350 (GSLSSGGQTS). Over residues 360 to 391 (STRTSHSLPESSVPSTVGCSSQHTPDQANSDR) the composition is skewed to polar residues. Position 456 is a phosphotyrosine (tyrosine 456). The span at 498–509 (VPVSVPASDPRS) shows a compositional bias: low complexity. Phosphoserine is present on serine 559. Positions 570–585 (RSPRRSRDPGYDHLWD) are enriched in basic and acidic residues.

Found in a complex with cytochrome c mRNA and various ribosomal proteins. Interacts with C1QBP. Interacts with ELAVL1. Interacts with BID. In terms of processing, phosphorylation is essential for its mitochondrial localization and regulates its interaction with C1QBP. In terms of tissue distribution, ubiquitous. Epressed in several cancer cell lines of differing origin.

Its subcellular location is the cell membrane. The protein resides in the mitochondrion. The protein localises to the mitochondrion membrane. Its function is as follows. Controls the stability of the leptin mRNA harboring an AU-rich element (ARE) in its 3' UTR, in cooperation with the RNA stabilizer ELAVL1. Decreases the stability of the leptin mRNA by antagonizing the function of ELAVL1 by inducing its atypical recruitment from the nucleus to the cytosol. Binds to cardiolipin (CL), phosphatidic acid (PA), phosphatidylinositol 4-phosphate (PtdIns(4)P) and phosphatidylserine (PS). Promotes apoptosis by enhancing BAX-BAK hetero-oligomerization via interaction with BID in colon cancer cells. The polypeptide is Pleckstrin homology domain-containing family N member 1 (PLEKHN1) (Homo sapiens (Human)).